Here is a 356-residue protein sequence, read N- to C-terminus: D-alanine--D-alanine ligase (356 aa).

The ATP-grasp domain occupies 134-339 (KQLFEHRGLP…YSDLITKLID (206 aa)). An ATP-binding site is contributed by 167–222 (KDKLTYPVFVKPANLGSSVGISKCNNEDELKSGIEEAFQFDRKLVIEQGINAREVE). Mg(2+) contacts are provided by Asp-293, Glu-306, and Asn-308.

It belongs to the D-alanine--D-alanine ligase family. The cofactor is Mg(2+). Requires Mn(2+) as cofactor.

The protein resides in the cytoplasm. The enzyme catalyses 2 D-alanine + ATP = D-alanyl-D-alanine + ADP + phosphate + H(+). The protein operates within cell wall biogenesis; peptidoglycan biosynthesis. Its function is as follows. Cell wall formation. This Staphylococcus haemolyticus (strain JCSC1435) protein is D-alanine--D-alanine ligase.